We begin with the raw amino-acid sequence, 95 residues long: Cobalt transport protein CbiN (95 aa).

Helical transmembrane passes span 5–25 (HILM…IYSG) and 67–87 (LLFA…FGYY).

This sequence belongs to the CbiN family. Forms an energy-coupling factor (ECF) transporter complex composed of an ATP-binding protein (A component, CbiO), a transmembrane protein (T component, CbiQ) and 2 possible substrate-capture proteins (S components, CbiM and CbiN) of unknown stoichimetry.

Its subcellular location is the cell membrane. It functions in the pathway cofactor biosynthesis; adenosylcobalamin biosynthesis. Functionally, part of the energy-coupling factor (ECF) transporter complex CbiMNOQ involved in cobalt import. The chain is Cobalt transport protein CbiN from Methanothermobacter thermautotrophicus (strain ATCC 29096 / DSM 1053 / JCM 10044 / NBRC 100330 / Delta H) (Methanobacterium thermoautotrophicum).